The primary structure comprises 342 residues: MHIGGGVVKIRILILLMLALFLLGCSSNVNTNVKLKVFHAGSLTEPMKAFKRAFEEKHPNVEVQTEAAGSAATIRKVTELGRKADVIATADYTLIQKMMYPEFANWTIMFAKNQIVLAYRNDSRYADEINSQNWYEILKRPDVRFGFSNPNDDPCGYRSLMAIQLAELYYNDPTIFDELVAKNSNLRFSEDNGSYVLRMPSSERIEINKSKIMIRSMEMELIHLVESGELDYFFIYKSVAKQHGFNFVELPVEIDLSSPDYAELYSKVKVVLANGKEVTGKPIVYGITIPKNAENRELAVEFVKLVISEEGQEILRELGQEPLVPPRADTAVPSLKAMVEVS.

An N-terminal signal peptide occupies residues Met-1–Gly-24. Residues Gly-41–Ser-42, Ser-70, Asp-153–Cys-155, Glu-218, and Tyr-236 each bind molybdate. Residues Gly-41–Ser-42, Ser-70, Asp-153–Cys-155, Glu-218, and Tyr-236 contribute to the tungstate site.

Belongs to the bacterial solute-binding protein 1 family. WtpA subfamily. In terms of assembly, the complex is composed of two ATP-binding proteins (WtpC), two transmembrane proteins (WtpB) and a solute-binding protein (WtpA).

It localises to the cell membrane. Part of the ABC transporter complex WtpABC involved in molybdate/tungstate import. Binds tungstate and molybdate. The protein is Molybdate/tungstate-binding protein WtpA (wtpA) of Archaeoglobus fulgidus (strain ATCC 49558 / DSM 4304 / JCM 9628 / NBRC 100126 / VC-16).